Here is a 283-residue protein sequence, read N- to C-terminus: Putative transcription factor kapC (283 aa).

Over residues 1–10 the composition is skewed to pro residues; that stretch reads MQPTLAPAPH. The segment at 1 to 121 is disordered; that stretch reads MQPTLAPAPH…NRAAQRAFRQ (121 aa). Positions 26 to 42 are enriched in low complexity; sequence HDQLLAAHQHLSHPQQA. Positions 55–67 are enriched in polar residues; that stretch reads QPNTTSPRDQNNI. Residues 102-165 enclose the bZIP domain; that stretch reads PLSTSKRAAQ…EYIINLQSRL (64 aa). The segment at 103–126 is basic motif; the sequence is LSTSKRAAQNRAAQRAFRQRKESY. The segment covering 108–118 has biased composition (low complexity); it reads RAAQNRAAQRA. A leucine-zipper region spans residues 130 to 161; that stretch reads LEEQVKEFDNTNETMKQLQAENYQLREYIINL. Residues 178 to 283 are disordered; it reads NIDLNQPRND…EPGHGLPVVS (106 aa).

This sequence belongs to the bZIP family.

The protein localises to the nucleus. In terms of biological role, putative transcription factor. The protein is Putative transcription factor kapC (kapC) of Aspergillus niger (strain ATCC MYA-4892 / CBS 513.88 / FGSC A1513).